Consider the following 455-residue polypeptide: Probable glycine dehydrogenase (decarboxylating) subunit 1 (455 aa).

Belongs to the GcvP family. N-terminal subunit subfamily. As to quaternary structure, the glycine cleavage system is composed of four proteins: P, T, L and H. In this organism, the P 'protein' is a heterodimer of two subunits.

The catalysed reaction is N(6)-[(R)-lipoyl]-L-lysyl-[glycine-cleavage complex H protein] + glycine + H(+) = N(6)-[(R)-S(8)-aminomethyldihydrolipoyl]-L-lysyl-[glycine-cleavage complex H protein] + CO2. Functionally, the glycine cleavage system catalyzes the degradation of glycine. The P protein binds the alpha-amino group of glycine through its pyridoxal phosphate cofactor; CO(2) is released and the remaining methylamine moiety is then transferred to the lipoamide cofactor of the H protein. This is Probable glycine dehydrogenase (decarboxylating) subunit 1 from Saccharolobus islandicus (strain Y.G.57.14 / Yellowstone #1) (Sulfolobus islandicus).